Here is a 106-residue protein sequence, read N- to C-terminus: Iron-sulfur cluster assembly protein CyaY (106 aa).

This sequence belongs to the frataxin family.

Its function is as follows. Involved in iron-sulfur (Fe-S) cluster assembly. May act as a regulator of Fe-S biogenesis. This chain is Iron-sulfur cluster assembly protein CyaY, found in Escherichia coli (strain SMS-3-5 / SECEC).